The following is a 506-amino-acid chain: Probable lipid II flippase MurJ (506 aa).

Transmembrane regions (helical) follow at residues 4–24, 86–106, 127–147, 153–173, 181–201, 232–252, 263–283, 308–328, 345–365, 377–397, 405–425, 436–456, and 474–494; these read YVVS…MGFV, TVIT…IIFA, VFGY…FVSV, IFFI…LSIF, IYSA…IPFA, IFGF…ASTL, AVVY…TVIF, ILLL…DYIL, TASV…FGFF, TPFY…VFGI, LALA…FIIL, ILFV…IYFF, and LMAA…VLGI.

Belongs to the MurJ/MviN family.

The protein localises to the cell inner membrane. The protein operates within cell wall biogenesis; peptidoglycan biosynthesis. In terms of biological role, involved in peptidoglycan biosynthesis. Transports lipid-linked peptidoglycan precursors from the inner to the outer leaflet of the cytoplasmic membrane. This is Probable lipid II flippase MurJ from Borreliella burgdorferi (strain ATCC 35210 / DSM 4680 / CIP 102532 / B31) (Borrelia burgdorferi).